The sequence spans 892 residues: LEAF RUST 10 DISEASE-RESISTANCE LOCUS RECEPTOR-LIKE PROTEIN KINASE-like 2.8 (892 aa).

The N-terminal stretch at 1 to 27 (MYYHSLSSYSILFFLFSLFHHLPCASS) is a signal peptide. At 28 to 496 (NQGLGWCESL…RFIATLVRYT (469 aa)) the chain is on the extracellular side. Residues Asn42, Asn71, Asn88, Asn112, Asn186, Asn222, Asn230, Asn286, Asn358, Asn384, Asn407, and Asn458 are each glycosylated (N-linked (GlcNAc...) asparagine). The chain crosses the membrane as a helical span at residues 497-517 (FIALGALTGVVIVFLVLLCPC). Over 518–892 (FRVQIFRKRK…TNSKLESSSL (375 aa)) the chain is Cytoplasmic. Thr547 carries the phosphothreonine modification. Residues 556 to 854 (KSFTEVVGRG…ALEVPPRPVL (299 aa)) enclose the Protein kinase domain. Residues 562-570 (VGRGGFGIV) and Lys584 each bind ATP. Tyr629 carries the post-translational modification Phosphotyrosine. Asp680 acts as the Proton acceptor in catalysis. A phosphothreonine mark is found at Thr717 and Thr720.

This sequence belongs to the protein kinase superfamily. Ser/Thr protein kinase family.

The protein resides in the membrane. It carries out the reaction L-seryl-[protein] + ATP = O-phospho-L-seryl-[protein] + ADP + H(+). It catalyses the reaction L-threonyl-[protein] + ATP = O-phospho-L-threonyl-[protein] + ADP + H(+). The polypeptide is LEAF RUST 10 DISEASE-RESISTANCE LOCUS RECEPTOR-LIKE PROTEIN KINASE-like 2.8 (Arabidopsis thaliana (Mouse-ear cress)).